The sequence spans 450 residues: uncharacterized protein (450 aa).

Basic and acidic residues predominate over residues 387–416; the sequence is ELDEKNNNKEENKNQDLHEPKESSSEDLLK. The disordered stretch occupies residues 387 to 439; that stretch reads ELDEKNNNKEENKNQDLHEPKESSSEDLLKRLNNLKINTNEGPVQDNENHDNE.

This is an uncharacterized protein from Saccharomyces cerevisiae (strain ATCC 204508 / S288c) (Baker's yeast).